The primary structure comprises 223 residues: Pyridoxal phosphate homeostasis protein (223 aa).

An N6-(pyridoxal phosphate)lysine modification is found at lysine 36.

Belongs to the pyridoxal phosphate-binding protein YggS/PROSC family. Monomer.

Functionally, pyridoxal 5'-phosphate (PLP)-binding protein, which is involved in PLP homeostasis. In Buchnera aphidicola subsp. Baizongia pistaciae (strain Bp), this protein is Pyridoxal phosphate homeostasis protein.